A 616-amino-acid chain; its full sequence is Sulfite reductase [NADPH] flavoprotein alpha-component (616 aa).

The 139-residue stretch at 80-218 folds into the Flavodoxin-like domain; it reads LTIIFASQTG…SAAQWRKQAL (139 aa). FMN contacts are provided by residues 86-91, 133-136, and 169-178; these read SQTGNA, STNG, and LGDSSYEFFC. The 215-residue stretch at 251 to 465 folds into the FAD-binding FR-type domain; the sequence is QKPYAATLLT…VENNNNFKLP (215 aa). Residues T339, G373, 403–406, 421–423, Y427, and 436–439 contribute to the FAD site; these read RLYS, TVG, and GGAS. NADP(+) is bound by residues 536-537, 542-546, and D578; these read SR and KVYVQ. Position 616 (Y616) interacts with FAD.

The protein belongs to the NADPH-dependent sulphite reductase flavoprotein subunit CysJ family. It in the N-terminal section; belongs to the flavodoxin family. This sequence in the C-terminal section; belongs to the flavoprotein pyridine nucleotide cytochrome reductase family. In terms of assembly, alpha(8)-beta(8). The alpha component is a flavoprotein, the beta component is a hemoprotein. It depends on FAD as a cofactor. The cofactor is FMN.

It catalyses the reaction hydrogen sulfide + 3 NADP(+) + 3 H2O = sulfite + 3 NADPH + 4 H(+). Its pathway is sulfur metabolism; hydrogen sulfide biosynthesis; hydrogen sulfide from sulfite (NADPH route): step 1/1. In terms of biological role, component of the sulfite reductase complex that catalyzes the 6-electron reduction of sulfite to sulfide. This is one of several activities required for the biosynthesis of L-cysteine from sulfate. The flavoprotein component catalyzes the electron flow from NADPH -&gt; FAD -&gt; FMN to the hemoprotein component. In Vibrio vulnificus (strain CMCP6), this protein is Sulfite reductase [NADPH] flavoprotein alpha-component.